A 637-amino-acid polypeptide reads, in one-letter code: Limonene synthase, chloroplastic (637 aa).

The transit peptide at 1 to 56 (MALLSIVSLQVPKSCGLKSLISSSNVQKALCISTAVPTLRMRRRQKALVINMKLTT) directs the protein to the chloroplast. The Mg(2+) site is built by Asp-388, Asp-392, and Asp-540. Positions 388–392 (DDIYD) match the DDXXD motif motif.

The protein belongs to the terpene synthase family. Tpsd subfamily. Mg(2+) is required as a cofactor. It depends on Mn(2+) as a cofactor. K(+) serves as cofactor.

It is found in the plastid. Its subcellular location is the chloroplast. It carries out the reaction (2E)-geranyl diphosphate = (4S)-limonene + diphosphate. The protein operates within terpene metabolism; oleoresin biosynthesis. Its function is as follows. Involved in defensive oleoresin formation in conifers in response to insect attack or other injury. Involved in monoterpene (C10) olefins biosynthesis. The protein is Limonene synthase, chloroplastic (ag10) of Abies grandis (Grand fir).